Consider the following 467-residue polypeptide: D-hydantoinase (467 aa).

3 residues coordinate Zn(2+): His-65, His-67, and Lys-156. Residue Lys-156 is modified to N6-carboxylysine. Tyr-161 is a binding site for substrate. The Zn(2+) site is built by His-189 and His-245. Residue Ser-294 coordinates substrate. Asp-321 contacts Zn(2+). Asn-343 is a substrate binding site.

It belongs to the metallo-dependent hydrolases superfamily. Hydantoinase/dihydropyrimidinase family. In terms of assembly, homotetramer. Zn(2+) serves as cofactor. Carboxylation allows a single lysine to coordinate two zinc ions.

In terms of biological role, catalyzes the stereospecific hydrolysis of the cyclic amide bond of D-hydantoin derivatives. The chain is D-hydantoinase (hyuA) from Streptomyces coelicolor (strain ATCC BAA-471 / A3(2) / M145).